A 196-amino-acid chain; its full sequence is DNA replication complex GINS protein PSF1 (196 aa).

This sequence belongs to the GINS1/PSF1 family. As to quaternary structure, component of the GINS complex which is a heterotetramer of gins1/psf1, gins2/psf2, gins3/psf3 and gins4/sld5. Component of the CMG helicase complex, composed of the mcm2-7 complex, the GINS complex and cdc45.

It localises to the nucleus. Its subcellular location is the chromosome. Functionally, required for correct functioning of the GINS complex, a complex that plays an essential role in the initiation of DNA replication, and progression of DNA replication forks. GINS complex is a core component of CDC45-MCM-GINS (CMG) helicase, the molecular machine that unwinds template DNA during replication, and around which the replisome is built. This is DNA replication complex GINS protein PSF1 from Xenopus laevis (African clawed frog).